Here is a 119-residue protein sequence, read N- to C-terminus: Large ribosomal subunit protein bL19 (119 aa).

The protein belongs to the bacterial ribosomal protein bL19 family.

This protein is located at the 30S-50S ribosomal subunit interface and may play a role in the structure and function of the aminoacyl-tRNA binding site. The protein is Large ribosomal subunit protein bL19 of Limosilactobacillus fermentum (strain NBRC 3956 / LMG 18251) (Lactobacillus fermentum).